Here is a 228-residue protein sequence, read N- to C-terminus: Urease accessory protein UreF 1 (228 aa).

This sequence belongs to the UreF family. As to quaternary structure, ureD, UreF and UreG form a complex that acts as a GTP-hydrolysis-dependent molecular chaperone, activating the urease apoprotein by helping to assemble the nickel containing metallocenter of UreC. The UreE protein probably delivers the nickel.

It is found in the cytoplasm. In terms of biological role, required for maturation of urease via the functional incorporation of the urease nickel metallocenter. Functionally, disruption of the ure1 gene cluster suggests that it protects brucellae during their passage through the stomach. The major route of infection in human brucellosis is oral. This Brucella abortus (strain 2308) protein is Urease accessory protein UreF 1.